We begin with the raw amino-acid sequence, 318 residues long: Pantothenate kinase (318 aa).

96-103 (GSVAVGKS) lines the ATP pocket.

Belongs to the prokaryotic pantothenate kinase family.

Its subcellular location is the cytoplasm. The enzyme catalyses (R)-pantothenate + ATP = (R)-4'-phosphopantothenate + ADP + H(+). Its pathway is cofactor biosynthesis; coenzyme A biosynthesis; CoA from (R)-pantothenate: step 1/5. The sequence is that of Pantothenate kinase from Coxiella burnetii (strain RSA 493 / Nine Mile phase I).